Here is a 204-residue protein sequence, read N- to C-terminus: Inner membrane protein BB_0250 (204 aa).

5 consecutive transmembrane segments (helical) span residues 17–37 (IAYS…NVPI), 58–78 (ILIF…SFYI), 101–121 (YYYG…PFGV), 139–159 (FIVS…TLSF), and 172–192 (IKII…IIYV).

Belongs to the DedA family.

Its subcellular location is the cell inner membrane. Its function is as follows. Required for proper cell division and envelope integrity. The sequence is that of Inner membrane protein BB_0250 from Borreliella burgdorferi (strain ATCC 35210 / DSM 4680 / CIP 102532 / B31) (Borrelia burgdorferi).